The primary structure comprises 251 residues: Putative ATP-binding protein Rv3427c in insertion sequence (251 aa).

ATP is bound at residue 108-115; it reads GPVGVGKT.

This sequence belongs to the IS21/IS1162 putative ATP-binding protein family.

The chain is Putative ATP-binding protein Rv3427c in insertion sequence from Mycobacterium tuberculosis (strain ATCC 25618 / H37Rv).